Consider the following 709-residue polypeptide: Polyribonucleotide nucleotidyltransferase (709 aa).

Mg(2+)-binding residues include Asp486 and Asp492. The 60-residue stretch at 553–612 (PRIHTIKINPDKIKDVIGKGGSVIRALTEETGTTIEIEDDGTVKIAATDGEKAKHAISRI) folds into the KH domain. Residues 622–690 (GRIYAGKVTR…RQGRVRLSIK (69 aa)) form the S1 motif domain.

Belongs to the polyribonucleotide nucleotidyltransferase family. Component of the RNA degradosome, which is a multiprotein complex involved in RNA processing and mRNA degradation. The cofactor is Mg(2+).

The protein resides in the cytoplasm. It carries out the reaction RNA(n+1) + phosphate = RNA(n) + a ribonucleoside 5'-diphosphate. In terms of biological role, involved in mRNA degradation. Catalyzes the phosphorolysis of single-stranded polyribonucleotides processively in the 3'- to 5'-direction. This Photorhabdus luminescens (Xenorhabdus luminescens) protein is Polyribonucleotide nucleotidyltransferase.